We begin with the raw amino-acid sequence, 272 residues long: 2,3,4,5-tetrahydropyridine-2,6-dicarboxylate N-succinyltransferase (272 aa).

The substrate site is built by arginine 104 and aspartate 141.

Belongs to the transferase hexapeptide repeat family. As to quaternary structure, homotrimer.

The protein localises to the cytoplasm. The catalysed reaction is (S)-2,3,4,5-tetrahydrodipicolinate + succinyl-CoA + H2O = (S)-2-succinylamino-6-oxoheptanedioate + CoA. Its pathway is amino-acid biosynthesis; L-lysine biosynthesis via DAP pathway; LL-2,6-diaminopimelate from (S)-tetrahydrodipicolinate (succinylase route): step 1/3. The chain is 2,3,4,5-tetrahydropyridine-2,6-dicarboxylate N-succinyltransferase from Dechloromonas aromatica (strain RCB).